Consider the following 100-residue polypeptide: Noncompact myelin-associated protein (100 aa).

The Extracellular portion of the chain corresponds to 1–28; the sequence is MTTATTLGDAVFSLNMTRGEDILYKSSG. Residues 29 to 49 form a helical membrane-spanning segment; the sequence is AIVAAIVVVVVIIVTLVLILL. The Cytoplasmic segment spans residues 50–100; it reads KMYNRRMRTRRELEPKSPKPPVPPALDPNSNGSQQPAAVTSDPADVPVETR. Positions 58 to 100 are disordered; the sequence is TRRELEPKSPKPPVPPALDPNSNGSQQPAAVTSDPADVPVETR. Residues 77-87 show a composition bias toward polar residues; it reads PNSNGSQQPAA.

In terms of processing, glycosylated. In terms of tissue distribution, expressed in the peripheral nervous system Schwann cells (at protein level).

It localises to the cell membrane. Functionally, plays a role in myelin formation. The chain is Noncompact myelin-associated protein (Ncmap) from Rattus norvegicus (Rat).